We begin with the raw amino-acid sequence, 67 residues long: Large ribosomal subunit protein eL24 (67 aa).

4 residues coordinate Zn(2+): cysteine 7, cysteine 10, cysteine 33, and cysteine 37. The C4-type zinc finger occupies 7-37; sequence CDYCGTDIEPGTGTMFVHKDGATTHFCSSKC. The segment covering 48–60 has biased composition (basic and acidic residues); the sequence is RNLEWTDTARGEA. Residues 48 to 67 form a disordered region; sequence RNLEWTDTARGEAGEAEDEA.

It belongs to the eukaryotic ribosomal protein eL24 family. Part of the 50S ribosomal subunit. Forms a cluster with proteins L3 and L14. Requires Zn(2+) as cofactor.

In terms of biological role, binds to the 23S rRNA. The chain is Large ribosomal subunit protein eL24 (rpl24e) from Haloarcula marismortui (strain ATCC 43049 / DSM 3752 / JCM 8966 / VKM B-1809) (Halobacterium marismortui).